Reading from the N-terminus, the 367-residue chain is Protein valois (367 aa).

WD repeat units follow at residues 101 to 139, 152 to 192, and 198 to 238; these read QAEHTVNIVRYAEDDFLLVALGDTRLQAWSTYSKVRDSQ, AHPT…MVST, and SHTD…PSST. The interval 309–367 is interaction with csul; the sequence is LAAMSNLPASVKVANVQAGHEFIYTHQDTHSRLTDAVWTDDSTLITIGHGRKMVTHAIK.

Interacts with csul and tud. In oocytes, localizes to pole plasm and nuage (at protein level). Expressed stronger in the germline than in somatic cells. In the germarium it sometimes concentrates in perinuclear aggregates that disappear by stage 2 of oogenesis. At later stages, it is uniformly distributed in the nurse cells and oocyte, as well as in young embryos, with no particular enrichment at the posterior or inside the pole cells (at protein level).

Its subcellular location is the cytoplasm. Its function is as follows. Involved in specific localization of cytoplasmic proteins during the formation of pole plasm. Required for synthesis and/or stability of oskar protein (osk) and localization of tudor (tud) in both the nuage and posterior pole of the oocyte. Required for normal posterior localization of osk in later stages of oogenesis and for posterior localization of the vasa (vas) protein during the entire process of pole plasm assembly. May act by regulating the complex that contains the arginine N-methyltransferase csul. The protein is Protein valois (vls) of Drosophila melanogaster (Fruit fly).